A 212-amino-acid chain; its full sequence is Outer-membrane lipoprotein carrier protein (212 aa).

The signal sequence occupies residues M1–A29.

It belongs to the LolA family. In terms of assembly, monomer.

It is found in the periplasm. Participates in the translocation of lipoproteins from the inner membrane to the outer membrane. Only forms a complex with a lipoprotein if the residue after the N-terminal Cys is not an aspartate (The Asp acts as a targeting signal to indicate that the lipoprotein should stay in the inner membrane). The chain is Outer-membrane lipoprotein carrier protein from Leptothrix cholodnii (strain ATCC 51168 / LMG 8142 / SP-6) (Leptothrix discophora (strain SP-6)).